The chain runs to 311 residues: Glutaminase (311 aa).

Substrate-binding residues include serine 66, asparagine 116, glutamate 162, asparagine 169, tyrosine 193, tyrosine 245, and valine 263.

It belongs to the glutaminase family. Homotetramer.

It carries out the reaction L-glutamine + H2O = L-glutamate + NH4(+). The sequence is that of Glutaminase from Rhodopseudomonas palustris (strain TIE-1).